A 128-amino-acid chain; its full sequence is MTNTSETTKTAIAHGNYVRGSASKVRRVLDQIRGRSYRDALIMLEFMPYRSTDPITKVLRSAVANAEHNYGMDPSTLIISSAWANNGPVMKRYRPRAQGRAFSIKKQTCHISISVESAPTQINAEVQN.

The protein belongs to the universal ribosomal protein uL22 family. Part of the 50S ribosomal subunit.

In terms of biological role, this protein binds specifically to 23S rRNA; its binding is stimulated by other ribosomal proteins, e.g. L4, L17, and L20. It is important during the early stages of 50S assembly. It makes multiple contacts with different domains of the 23S rRNA in the assembled 50S subunit and ribosome. Its function is as follows. The globular domain of the protein is located near the polypeptide exit tunnel on the outside of the subunit, while an extended beta-hairpin is found that lines the wall of the exit tunnel in the center of the 70S ribosome. The sequence is that of Large ribosomal subunit protein uL22 from Prochlorococcus marinus (strain MIT 9312).